A 273-amino-acid chain; its full sequence is Putative phosphoenolpyruvate synthase regulatory protein (273 aa).

Residue 153–160 (GVSRCGKT) participates in ADP binding.

This sequence belongs to the pyruvate, phosphate/water dikinase regulatory protein family. PSRP subfamily.

The enzyme catalyses [pyruvate, water dikinase] + ADP = [pyruvate, water dikinase]-phosphate + AMP + H(+). It catalyses the reaction [pyruvate, water dikinase]-phosphate + phosphate + H(+) = [pyruvate, water dikinase] + diphosphate. Bifunctional serine/threonine kinase and phosphorylase involved in the regulation of the phosphoenolpyruvate synthase (PEPS) by catalyzing its phosphorylation/dephosphorylation. The chain is Putative phosphoenolpyruvate synthase regulatory protein from Yersinia enterocolitica serotype O:8 / biotype 1B (strain NCTC 13174 / 8081).